Reading from the N-terminus, the 188-residue chain is HGPRTase-like protein (188 aa).

Belongs to the purine/pyrimidine phosphoribosyltransferase family. Archaeal HPRT subfamily.

In terms of biological role, may catalyze a purine salvage reaction, the substrate is unknown. This chain is HGPRTase-like protein, found in Halobacterium salinarum (strain ATCC 29341 / DSM 671 / R1).